A 361-amino-acid polypeptide reads, in one-letter code: 3-dehydroquinate synthase (361 aa).

Residues 72–77, 130–131, K142, and K151 each bind NAD(+); these read SGEKEK and TT. Residues E184, H247, and H264 each contribute to the Zn(2+) site.

The protein belongs to the sugar phosphate cyclases superfamily. Dehydroquinate synthase family. It depends on Co(2+) as a cofactor. The cofactor is Zn(2+). NAD(+) serves as cofactor.

The protein resides in the cytoplasm. The catalysed reaction is 7-phospho-2-dehydro-3-deoxy-D-arabino-heptonate = 3-dehydroquinate + phosphate. It participates in metabolic intermediate biosynthesis; chorismate biosynthesis; chorismate from D-erythrose 4-phosphate and phosphoenolpyruvate: step 2/7. Catalyzes the conversion of 3-deoxy-D-arabino-heptulosonate 7-phosphate (DAHP) to dehydroquinate (DHQ). The chain is 3-dehydroquinate synthase from Bacillus cereus (strain G9842).